The chain runs to 117 residues: Pancreatic progenitor cell differentiation and proliferation factor A (117 aa).

The tract at residues 22–46 (GSTSSNSSCSSSEYTGEVIPHPPGL) is disordered. The segment covering 23-33 (STSSNSSCSSS) has biased composition (low complexity).

This sequence belongs to the PPDPF family. Expressed exclusively in the exocrine cells during pancreas development.

Probable regulator of exocrine pancreas development. This Danio rerio (Zebrafish) protein is Pancreatic progenitor cell differentiation and proliferation factor A (ppdpfa).